The primary structure comprises 199 residues: 5'-deoxynucleotidase YfbR (199 aa).

Residues 18-19 and His-33 each bind substrate; that span reads RW. Residues 30–142 form the HD domain; the sequence is VSEHSLQVAM…VKQADALCAY (113 aa). 3 residues coordinate a divalent metal cation: His-33, His-68, and Asp-69. Substrate-binding positions include Asp-69, 77-80, and Asp-137; that span reads DLPT. A divalent metal cation is bound at residue Asp-137.

This sequence belongs to the 5DNU family. As to quaternary structure, homodimer. It depends on a divalent metal cation as a cofactor.

It localises to the cytoplasm. It catalyses the reaction a 2'-deoxyribonucleoside 5'-phosphate + H2O = a 2'-deoxyribonucleoside + phosphate. Catalyzes the strictly specific dephosphorylation of 2'-deoxyribonucleoside 5'-monophosphates. The chain is 5'-deoxynucleotidase YfbR from Escherichia coli (strain K12 / MC4100 / BW2952).